We begin with the raw amino-acid sequence, 147 residues long: Small ribosomal subunit protein uS12 (147 aa).

This sequence belongs to the universal ribosomal protein uS12 family. Part of the 30S ribosomal subunit.

Functionally, with S4 and S5 plays an important role in translational accuracy. Located at the interface of the 30S and 50S subunits. The chain is Small ribosomal subunit protein uS12 from Methanococcus maripaludis (strain C5 / ATCC BAA-1333).